The chain runs to 146 residues: Cystatin-C (146 aa).

An N-terminal signal peptide occupies residues 1–26 (MAGPLRAPLLLLAILAVALALSPAAG). Ser43 is modified (phosphoserine). Residues 81–85 (QIVAG) carry the Secondary area of contact motif. 2 disulfides stabilise this stretch: Cys99-Cys109 and Cys123-Cys143.

This sequence belongs to the cystatin family.

Its subcellular location is the secreted. As an inhibitor of cysteine proteinases, this protein is thought to serve an important physiological role as a local regulator of this enzyme activity. The polypeptide is Cystatin-C (CST3) (Saimiri sciureus (Common squirrel monkey)).